Reading from the N-terminus, the 279-residue chain is Zinc-finger homeodomain protein 1 (279 aa).

Residues 1–13 are compositionally biased toward acidic residues; the sequence is MDFDDHDDGDEEM. The segment at 1–47 is disordered; it reads MDFDDHDDGDEEMPPMPVSSSYETPPQHGLAGGGMAPKPPGEIGSRV. The ZF-HD dimerization-type; degenerate zinc-finger motif lies at 57–106; sequence YRECLKNHAVGIGGHAVDGCGEFMAAGEEGTIDALRCAACNCHRNFHRKE. Positions 168–190 are disordered; sequence RPLALPSTSHSGRDDGDDLSGMV. The homeobox DNA-binding region spans 215 to 278; the sequence is KKRFRTKFTQ…NNKHTLGKKL (64 aa).

As to quaternary structure, homo- and heterodimer with other ZFHD proteins.

It is found in the nucleus. Putative transcription factor. This chain is Zinc-finger homeodomain protein 1 (ZHD1), found in Oryza sativa subsp. japonica (Rice).